We begin with the raw amino-acid sequence, 288 residues long: Fructose-bisphosphate aldolase (288 aa).

Residue Ser-49 participates in D-glyceraldehyde 3-phosphate binding. Residue Asp-84 is the Proton donor of the active site. Zn(2+) is bound by residues His-85, Asp-105, Glu-135, and His-177. Gly-178 contributes to the dihydroxyacetone phosphate binding site. Residue His-206 participates in Zn(2+) binding. Dihydroxyacetone phosphate-binding positions include Gly-207–Ser-209 and Asn-228–Thr-231.

The protein belongs to the class II fructose-bisphosphate aldolase family. Homodimer. Zn(2+) serves as cofactor.

It catalyses the reaction beta-D-fructose 1,6-bisphosphate = D-glyceraldehyde 3-phosphate + dihydroxyacetone phosphate. It functions in the pathway carbohydrate degradation; glycolysis; D-glyceraldehyde 3-phosphate and glycerone phosphate from D-glucose: step 4/4. Functionally, catalyzes the aldol condensation of dihydroxyacetone phosphate (DHAP or glycerone-phosphate) with glyceraldehyde 3-phosphate (G3P) to form fructose 1,6-bisphosphate (FBP) in gluconeogenesis and the reverse reaction in glycolysis. The protein is Fructose-bisphosphate aldolase (fba) of Mycoplasma pneumoniae (strain ATCC 29342 / M129 / Subtype 1) (Mycoplasmoides pneumoniae).